A 276-amino-acid polypeptide reads, in one-letter code: Bis(5'-nucleosyl)-tetraphosphatase, symmetrical (276 aa).

The protein belongs to the Ap4A hydrolase family.

It catalyses the reaction P(1),P(4)-bis(5'-adenosyl) tetraphosphate + H2O = 2 ADP + 2 H(+). Its function is as follows. Hydrolyzes diadenosine 5',5'''-P1,P4-tetraphosphate to yield ADP. The chain is Bis(5'-nucleosyl)-tetraphosphatase, symmetrical from Neisseria gonorrhoeae (strain ATCC 700825 / FA 1090).